A 169-amino-acid polypeptide reads, in one-letter code: Cell division inhibitor SulA (169 aa).

Polar residues predominate over residues 1 to 13; it reads MFTSAHANRSAQA. Residues 1 to 26 are disordered; sequence MFTSAHANRSAQASAPAGHYAHRSGE. The interval 106–112 is ftsZ binding; the sequence is ALRTGNY. The segment at 162 to 169 is lon protease binding; the sequence is KIHSNLYH.

Belongs to the SulA family. As to quaternary structure, interacts with FtsZ. In terms of processing, is rapidly cleaved and degraded by the Lon protease once DNA damage is repaired.

Component of the SOS system and an inhibitor of cell division. Accumulation of SulA causes rapid cessation of cell division and the appearance of long, non-septate filaments. In the presence of GTP, binds a polymerization-competent form of FtsZ in a 1:1 ratio, thus inhibiting FtsZ polymerization and therefore preventing it from participating in the assembly of the Z ring. This mechanism prevents the premature segregation of damaged DNA to daughter cells during cell division. The polypeptide is Cell division inhibitor SulA (Klebsiella pneumoniae subsp. pneumoniae (strain ATCC 700721 / MGH 78578)).